We begin with the raw amino-acid sequence, 104 residues long: MSQVRKNDHSLMKVLLGPVISEKATMVAEKNEQVVFQVARDANKSDVKQAVELLFKVQVDSVQIVNQKGKPKRYGRFEGRRDHTKKAYVNLKPGQEINFEAEAN.

This sequence belongs to the universal ribosomal protein uL23 family. Part of the 50S ribosomal subunit. Contacts protein L29, and trigger factor when it is bound to the ribosome.

In terms of biological role, one of the early assembly proteins it binds 23S rRNA. One of the proteins that surrounds the polypeptide exit tunnel on the outside of the ribosome. Forms the main docking site for trigger factor binding to the ribosome. The sequence is that of Large ribosomal subunit protein uL23 from Polynucleobacter asymbioticus (strain DSM 18221 / CIP 109841 / QLW-P1DMWA-1) (Polynucleobacter necessarius subsp. asymbioticus).